Here is a 203-residue protein sequence, read N- to C-terminus: Pyrrolidone-carboxylate peptidase 1 (203 aa).

Active-site residues include Glu78, Cys141, and His165.

Belongs to the peptidase C15 family. As to quaternary structure, homotetramer.

It is found in the cytoplasm. The enzyme catalyses Release of an N-terminal pyroglutamyl group from a polypeptide, the second amino acid generally not being Pro.. Functionally, removes 5-oxoproline from various penultimate amino acid residues except L-proline. The chain is Pyrrolidone-carboxylate peptidase 1 from Caldanaerobacter subterraneus subsp. tengcongensis (strain DSM 15242 / JCM 11007 / NBRC 100824 / MB4) (Thermoanaerobacter tengcongensis).